We begin with the raw amino-acid sequence, 204 residues long: Methylthioribulose-1-phosphate dehydratase (204 aa).

2 residues coordinate Zn(2+): His-94 and His-96.

Belongs to the aldolase class II family. MtnB subfamily. It depends on Zn(2+) as a cofactor.

It carries out the reaction 5-(methylsulfanyl)-D-ribulose 1-phosphate = 5-methylsulfanyl-2,3-dioxopentyl phosphate + H2O. It participates in amino-acid biosynthesis; L-methionine biosynthesis via salvage pathway; L-methionine from S-methyl-5-thio-alpha-D-ribose 1-phosphate: step 2/6. Catalyzes the dehydration of methylthioribulose-1-phosphate (MTRu-1-P) into 2,3-diketo-5-methylthiopentyl-1-phosphate (DK-MTP-1-P). This Pseudomonas savastanoi pv. phaseolicola (strain 1448A / Race 6) (Pseudomonas syringae pv. phaseolicola (strain 1448A / Race 6)) protein is Methylthioribulose-1-phosphate dehydratase.